Here is a 154-residue protein sequence, read N- to C-terminus: 6,7-dimethyl-8-ribityllumazine synthase (154 aa).

5-amino-6-(D-ribitylamino)uracil is bound by residues phenylalanine 22, 56–58 (AFE), and 80–82 (AVI). 85-86 (ET) contacts (2S)-2-hydroxy-3-oxobutyl phosphate. Histidine 88 (proton donor) is an active-site residue. Phenylalanine 113 provides a ligand contact to 5-amino-6-(D-ribitylamino)uracil. Arginine 127 serves as a coordination point for (2S)-2-hydroxy-3-oxobutyl phosphate.

It belongs to the DMRL synthase family.

The enzyme catalyses (2S)-2-hydroxy-3-oxobutyl phosphate + 5-amino-6-(D-ribitylamino)uracil = 6,7-dimethyl-8-(1-D-ribityl)lumazine + phosphate + 2 H2O + H(+). It functions in the pathway cofactor biosynthesis; riboflavin biosynthesis; riboflavin from 2-hydroxy-3-oxobutyl phosphate and 5-amino-6-(D-ribitylamino)uracil: step 1/2. Its function is as follows. Catalyzes the formation of 6,7-dimethyl-8-ribityllumazine by condensation of 5-amino-6-(D-ribitylamino)uracil with 3,4-dihydroxy-2-butanone 4-phosphate. This is the penultimate step in the biosynthesis of riboflavin. In Thermoanaerobacter sp. (strain X514), this protein is 6,7-dimethyl-8-ribityllumazine synthase.